Reading from the N-terminus, the 194-residue chain is MATRLIIGLGNPGPKYQWTRHNAGFMVLDHLSRVMGTSVAKKSFSGLYGEGSWHGDRLLLLKPQTFMNLSGRSAAEALRFHKLTLSDLIVIHDDLDIPFGRVKLKEGGGHGGHNGLRSLMQELGGGGFVRIRIGVGRPLRGDAADYVLANFSSAEMAGLPALLDGVVDLLGELVRNGLPRTMSLYNNKDFLPAA.

Position 16 (Tyr16) interacts with tRNA. His21 acts as the Proton acceptor in catalysis. Residues Phe66, Asn68, and Asn114 each contribute to the tRNA site.

The protein belongs to the PTH family. Monomer.

It localises to the cytoplasm. It carries out the reaction an N-acyl-L-alpha-aminoacyl-tRNA + H2O = an N-acyl-L-amino acid + a tRNA + H(+). Its function is as follows. Hydrolyzes ribosome-free peptidyl-tRNAs (with 1 or more amino acids incorporated), which drop off the ribosome during protein synthesis, or as a result of ribosome stalling. Catalyzes the release of premature peptidyl moieties from peptidyl-tRNA molecules trapped in stalled 50S ribosomal subunits, and thus maintains levels of free tRNAs and 50S ribosomes. This chain is Peptidyl-tRNA hydrolase, found in Geobacter metallireducens (strain ATCC 53774 / DSM 7210 / GS-15).